The primary structure comprises 278 residues: MTTRIDTRFADLKQQGRPALVTFVMAGDPDLDTSLQILKALPAAGADVIEIGMPFTDPMADGPAIQAAGLRALKAGTTLKKTLGLVRDFRATDNATPLVLMGYYNPIYIYGVDAFLADAKAAGVDGLIIVDLPPEEDEELCLPAMKAGLNFIRLATPTTDEKRLPAVLANTSGFVYYVSITGITGSASADASAVGAAVQRIKRHTNLPVCVGFGIRTPDAAQAIAAQANGAVVGSALIDALKASLDAEGRATKGTVGAVADLVASLAAGVRGAKQAAE.

Catalysis depends on proton acceptor residues glutamate 50 and aspartate 61.

Belongs to the TrpA family. Tetramer of two alpha and two beta chains.

It catalyses the reaction (1S,2R)-1-C-(indol-3-yl)glycerol 3-phosphate + L-serine = D-glyceraldehyde 3-phosphate + L-tryptophan + H2O. It functions in the pathway amino-acid biosynthesis; L-tryptophan biosynthesis; L-tryptophan from chorismate: step 5/5. The alpha subunit is responsible for the aldol cleavage of indoleglycerol phosphate to indole and glyceraldehyde 3-phosphate. This is Tryptophan synthase alpha chain from Rhodopseudomonas palustris (strain TIE-1).